A 242-amino-acid polypeptide reads, in one-letter code: Ribosomal RNA large subunit methyltransferase E (242 aa).

5 residues coordinate S-adenosyl-L-methionine: Gly88, Trp90, Asp111, Asp127, and Asp151. Lys191 acts as the Proton acceptor in catalysis.

The protein belongs to the class I-like SAM-binding methyltransferase superfamily. RNA methyltransferase RlmE family.

The protein resides in the cytoplasm. The enzyme catalyses uridine(2552) in 23S rRNA + S-adenosyl-L-methionine = 2'-O-methyluridine(2552) in 23S rRNA + S-adenosyl-L-homocysteine + H(+). Its function is as follows. Specifically methylates the uridine in position 2552 of 23S rRNA at the 2'-O position of the ribose in the fully assembled 50S ribosomal subunit. The polypeptide is Ribosomal RNA large subunit methyltransferase E (Bartonella tribocorum (strain CIP 105476 / IBS 506)).